The primary structure comprises 362 residues: Peptide chain release factor 1 (362 aa).

Residue Q237 is modified to N5-methylglutamine.

This sequence belongs to the prokaryotic/mitochondrial release factor family. In terms of processing, methylated by PrmC. Methylation increases the termination efficiency of RF1.

It is found in the cytoplasm. Its function is as follows. Peptide chain release factor 1 directs the termination of translation in response to the peptide chain termination codons UAG and UAA. The sequence is that of Peptide chain release factor 1 from Legionella pneumophila (strain Paris).